We begin with the raw amino-acid sequence, 284 residues long: Formamidopyrimidine-DNA glycosylase (284 aa).

The active-site Schiff-base intermediate with DNA is P2. E3 acts as the Proton donor in catalysis. The Proton donor; for beta-elimination activity role is filled by K58. Residues H97, R120, and R165 each contribute to the DNA site. The FPG-type zinc finger occupies 250–284 (FVYDRAGEPCKVCGTPVRQIVQGQRSTFYCTHCQH). R274 acts as the Proton donor; for delta-elimination activity in catalysis.

It belongs to the FPG family. Monomer. The cofactor is Zn(2+).

The catalysed reaction is Hydrolysis of DNA containing ring-opened 7-methylguanine residues, releasing 2,6-diamino-4-hydroxy-5-(N-methyl)formamidopyrimidine.. It catalyses the reaction 2'-deoxyribonucleotide-(2'-deoxyribose 5'-phosphate)-2'-deoxyribonucleotide-DNA = a 3'-end 2'-deoxyribonucleotide-(2,3-dehydro-2,3-deoxyribose 5'-phosphate)-DNA + a 5'-end 5'-phospho-2'-deoxyribonucleoside-DNA + H(+). Involved in base excision repair of DNA damaged by oxidation or by mutagenic agents. Acts as a DNA glycosylase that recognizes and removes damaged bases. Has a preference for oxidized purines, such as 7,8-dihydro-8-oxoguanine (8-oxoG). Has AP (apurinic/apyrimidinic) lyase activity and introduces nicks in the DNA strand. Cleaves the DNA backbone by beta-delta elimination to generate a single-strand break at the site of the removed base with both 3'- and 5'-phosphates. The sequence is that of Formamidopyrimidine-DNA glycosylase from Cupriavidus pinatubonensis (strain JMP 134 / LMG 1197) (Cupriavidus necator (strain JMP 134)).